Consider the following 777-residue polypeptide: Serine/threonine-protein kinase PLK4 (777 aa).

The region spanning 14–268 (YEVQHLLGKG…LEQVLRHPFL (255 aa)) is the Protein kinase domain. ATP contacts are provided by residues 20–28 (LGKGGFASV) and lysine 43. The active-site Proton acceptor is the aspartate 139. Positions 371–381 (TNNLAPFTSDS) are enriched in polar residues. Residues 371–390 (TNNLAPFTSDSDMIPSPVGE) form a disordered region. The Cryptic POLO box 1 (CPB1) domain maps to 390–507 (EKRLLMPPLE…ARFVGLVKSK (118 aa)). The Cryptic POLO box 2 (CPB2) domain occupies 508–611 (TPKITFFSSL…GRRPAADMHA (104 aa)). The region spanning 669-748 (PIKRITVPEI…MPQLQMKLKC (80 aa)) is the POLO box domain.

It belongs to the protein kinase superfamily. Ser/Thr protein kinase family. CDC5/Polo subfamily. As to quaternary structure, homodimer. Post-translationally, ubiquitinated by the SCF(Slimb) ubiquitin ligase complex; leading to its degradation by the proteasome during interphase and regulating centriole number and ensuring the block to centriole reduplication.

It is found in the cytoplasm. Its subcellular location is the cytoskeleton. The protein resides in the microtubule organizing center. The protein localises to the centrosome. It localises to the centriole. It carries out the reaction L-seryl-[protein] + ATP = O-phospho-L-seryl-[protein] + ADP + H(+). The enzyme catalyses L-threonyl-[protein] + ATP = O-phospho-L-threonyl-[protein] + ADP + H(+). Serine/threonine-protein kinase that plays a central role in centriole duplication. Able to trigger procentriole formation on the surface of the mother centriole cylinder, using mother centriole as a platform, leading to the recruitment of centriole biogenesis proteins such as sas-6. When overexpressed, it is able to induce centrosome amplification through the simultaneous generation of multiple procentrioles adjoining each parental centriole during S phase. Centrosome amplification following overexpression can initiate tumorigenesis, highlighting the importance of centrosome regulation in cancers. The sequence is that of Serine/threonine-protein kinase PLK4 (SAK) from Drosophila persimilis (Fruit fly).